The sequence spans 776 residues: Glucocorticoid receptor (776 aa).

Polar residues predominate over residues 1-11 (MDSKESLTSPS). The segment at 1–25 (MDSKESLTSPSEEIPSSVHGQERGN) is disordered. Positions 1-419 (MDSKESLTSP…LSAVGPPPKF (419 aa)) are modulating. At threonine 8 the chain carries Phosphothreonine. Omega-N-methylarginine is present on arginine 23. Phosphoserine is present on residues serine 45, serine 113, and serine 134. Residues 157–178 (PETPSDVSSEQQNLKGQTGTNG) are disordered. Residues 161 to 174 (SDVSSEQQNLKGQT) show a composition bias toward polar residues. Phosphoserine is present on residues serine 203, serine 211, and serine 226. Residue lysine 258 forms a Glycyl lysine isopeptide (Lys-Gly) (interchain with G-Cter in SUMO2) linkage. At serine 267 the chain carries Phosphoserine. Residues lysine 277 and lysine 293 each participate in a glycyl lysine isopeptide (Lys-Gly) (interchain with G-Cter in SUMO); alternate cross-link. Residues lysine 277 and lysine 293 each participate in a glycyl lysine isopeptide (Lys-Gly) (interchain with G-Cter in SUMO2); alternate cross-link. Serine 307 and serine 404 each carry phosphoserine. Residues 417–492 (PKFCLVCSDE…AGMNLEARKT (76 aa)) constitute a DNA-binding region (nuclear receptor). Lysine 418 is covalently cross-linked (Glycyl lysine isopeptide (Lys-Gly) (interchain with G-Cter in ubiquitin)). NR C4-type zinc fingers lie at residues 420-440 (CLVC…CGSC) and 456-480 (CAGR…YRKC). N6-acetyllysine occurs at positions 479, 491, 493, and 494. Residues 484 to 776 (GMNLEARKTK…NIKKLLFHQK (293 aa)) form an interaction with CLOCK region. Residues 486–522 (NLEARKTKKKIKGIQQTTTGISQETPENSANKTIVPA) are hinge. An NR LBD domain is found at 523–757 (TLPQLTPTPV…FPEMLAEIIT (235 aa)). Residues 531-696 (PVSLLEVIEP…EIRMTYIKEL (166 aa)) are interaction with CRY1. A Glycyl lysine isopeptide (Lys-Gly) (interchain with G-Cter in SUMO) cross-link involves residue lysine 702.

This sequence belongs to the nuclear hormone receptor family. NR3 subfamily. In terms of assembly, heteromultimeric cytoplasmic complex with HSP90AA1, HSPA1A/HSPA1B, and FKBP5 or another immunophilin such as PPID, STIP1, or the immunophilin homolog PPP5C. Upon ligand binding FKBP5 dissociates from the complex and FKBP4 takes its place, thereby linking the complex to dynein and mediating transport to the nucleus, where the complex dissociates. Probably forms a complex composed of chaperones HSP90 and HSP70, co-chaperones CDC37, PPP5C, TSC1 and client protein TSC2, CDK4, AKT, RAF1 and NR3C1; this complex does not contain co-chaperones STIP1/HOP and PTGES3/p23. Directly interacts with UNC45A. Binds to DNA as a homodimer, and as heterodimer with NR3C2 or the retinoid X receptor. Binds STAT5A and STAT5B homodimers and heterodimers. Interacts with NRIP1, POU2F1, POU2F2 and TRIM28. Interacts with several coactivator complexes, including the SMARCA4 complex, CREBBP/EP300, TADA2L (Ada complex) and p160 coactivators such as NCOA2 and NCOA6. Interaction with BAG1 inhibits transactivation. Interacts with HEXIM1 and TGFB1I1. Interacts with NCOA1. Interacts with NCOA3, SMARCA4, SMARCC1, SMARCD1, and SMARCE1. Interacts with CLOCK, CRY1 and CRY2 in a ligand-dependent fashion. Interacts with CIART. Interacts with RWDD3. Interacts with UBE2I/UBC9 and this interaction is enhanced in the presence of RWDD3. Interacts with GRIP1. Interacts with NR4A3 (via nuclear receptor DNA-binding domain), represses transcription activity of NR4A3 on the POMC promoter Nur response element (NurRE). Directly interacts with PNRC2 to attract and form a complex with UPF1 and DCP1A; the interaction leads to rapid mRNA degradation. Interacts with GSK3B. Interacts with FNIP1 and FNIP2. Interacts (via C-terminus) with NR3C1 (via C-terminus). Interacts with MCM3AP. Interacts (via domain NR LBD) with HSP90AA1 and HSP90AB1. In the absence of hormonal ligand, interacts with TACC1. Post-translationally, acetylation by CLOCK reduces its binding to glucocorticoid response elements and its transcriptional activity. In terms of processing, increased proteasome-mediated degradation in response to glucocorticoids. Phosphorylated in the absence of hormone; becomes hyperphosphorylated in the presence of glucocorticoid. The Ser-203, Ser-226 and Ser-404-phosphorylated forms are mainly cytoplasmic, and the Ser-211-phosphorylated form is nuclear. Phosphorylation at Ser-211 increases transcriptional activity. Phosphorylation at Ser-203, Ser-226 and Ser-404 decreases signaling capacity. Phosphorylation at Ser-404 may protect from glucocorticoid-induced apoptosis. Phosphorylation at Ser-203 and Ser-211 is not required in regulation of chromosome segregation. May be dephosphorylated by PPP5C, attenuates NR3C1 action. Post-translationally, sumoylation at Lys-277 and Lys-293 negatively regulates its transcriptional activity. Sumoylation at Lys-702 positively regulates its transcriptional activity in the presence of RWDD3. Sumoylation at Lys-277 and Lys-293 is dispensable whereas sumoylation at Lys-702 is critical for the stimulatory effect of RWDD3 on its transcriptional activity. Heat shock increases sumoylation in a RWDD3-dependent manner. In terms of processing, ubiquitinated by UBR5, leading to its degradation: UBR5 specifically recognizes and binds ligand-bound NR3C1 when it is not associated with coactivators (NCOAs). In presence of NCOAs, the UBR5-degron is not accessible, preventing its ubiquitination and degradation.

It is found in the cytoplasm. Its subcellular location is the nucleus. The protein localises to the mitochondrion. The protein resides in the cytoskeleton. It localises to the spindle. It is found in the microtubule organizing center. Its subcellular location is the centrosome. The protein localises to the chromosome. The protein resides in the nucleoplasm. Receptor for glucocorticoids (GC). Has a dual mode of action: as a transcription factor that binds to glucocorticoid response elements (GRE), both for nuclear and mitochondrial DNA, and as a modulator of other transcription factors. Affects inflammatory responses, cellular proliferation and differentiation in target tissues. Involved in chromatin remodeling. Plays a role in rapid mRNA degradation by binding to the 5' UTR of target mRNAs and interacting with PNRC2 in a ligand-dependent manner which recruits the RNA helicase UPF1 and the mRNA-decapping enzyme DCP1A, leading to RNA decay. Could act as a coactivator for STAT5-dependent transcription upon growth hormone (GH) stimulation and could reveal an essential role of hepatic GR in the control of body growth. Mediates glucocorticoid-induced apoptosis. Promotes accurate chromosome segregation during mitosis. May act as a tumor suppressor. May play a negative role in adipogenesis through the regulation of lipolytic and antilipogenic gene expression. In Tupaia belangeri (Common tree shrew), this protein is Glucocorticoid receptor (NR3C1).